A 282-amino-acid chain; its full sequence is NADPH-dependent 7-cyano-7-deazaguanine reductase (282 aa).

Residue 88–90 coordinates substrate; the sequence is IES. 90–91 provides a ligand contact to NADPH; it reads SK. Cys190 acts as the Thioimide intermediate in catalysis. Asp197 serves as the catalytic Proton donor. A substrate-binding site is contributed by 229–230; sequence HE. NADPH is bound at residue 258 to 259; sequence RG.

The protein belongs to the GTP cyclohydrolase I family. QueF type 2 subfamily. Homodimer.

Its subcellular location is the cytoplasm. The enzyme catalyses 7-aminomethyl-7-carbaguanine + 2 NADP(+) = 7-cyano-7-deazaguanine + 2 NADPH + 3 H(+). Its pathway is tRNA modification; tRNA-queuosine biosynthesis. Catalyzes the NADPH-dependent reduction of 7-cyano-7-deazaguanine (preQ0) to 7-aminomethyl-7-deazaguanine (preQ1). The protein is NADPH-dependent 7-cyano-7-deazaguanine reductase of Salmonella paratyphi A (strain ATCC 9150 / SARB42).